The following is a 154-amino-acid chain: uncharacterized protein (154 aa).

12–19 (GSSDVGKT) serves as a coordination point for GTP. The 96-residue stretch at 17–112 (GKTTLMENLI…KIPYGIFINK (96 aa)) folds into the G domain.

This sequence to M.thermoautotrophicum MTH765.

This is an uncharacterized protein from Methanocaldococcus jannaschii (strain ATCC 43067 / DSM 2661 / JAL-1 / JCM 10045 / NBRC 100440) (Methanococcus jannaschii).